Consider the following 716-residue polypeptide: Interleukin-31 receptor subunit alpha (716 aa).

The N-terminal stretch at 1–18 is a signal peptide; the sequence is MWTLALWAFSFLCKFSLA. The Extracellular portion of the chain corresponds to 19-499; sequence VLPTKPENIS…TNGVRINFKT (481 aa). 5 Fibronectin type-III domains span residues 23-115, 117-211, 213-304, 305-403, and 408-502; these read KPEN…IAKT, PPII…TMEE, PHVL…ILRI, PDVH…QAYA, and PLKG…TLSI. N-linked (GlcNAc...) asparagine glycosylation is found at asparagine 36, asparagine 48, and asparagine 64. N-linked (GlcNAc...) asparagine glycosylation occurs at asparagine 382. A helical membrane pass occupies residues 500-520; that stretch reads LSISVFEIVLLTSLVGGGLLL. Residues 521 to 716 are Cytoplasmic-facing; sequence LSIKTVTFGL…NIPEHSKGEV (196 aa). 2 disordered regions span residues 622-641 and 648-696; these read EYVT…FKEP and ASED…LKNS. Residues 670–679 show a composition bias toward polar residues; it reads QPSSSCQSPG.

Belongs to the type I cytokine receptor family. Type 2 subfamily. In terms of assembly, heterodimer with OSMR. Interacts with JAK1 and STAT3. N-glycosylated. In terms of tissue distribution, expressed in a subset of dorsal root ganglia neurons. Expressed in spinal cord and trigeminal ganglion (at protein level). Expressed in skin, testis, bone marrow and thymus.

It localises to the cell membrane. It is found in the presynaptic cell membrane. The protein localises to the cell projection. Its subcellular location is the axon. Associates with OSMR to form the interleukin-31 receptor which activates STAT3 and to a lower extent STAT1 and STAT5. May function in skin immunity. Mediates IL31-induced itch, probably in a manner dependent on cation channels TRPA1 and TRPV1. Positively regulates numbers and cycling status of immature subsets of myeloid progenitor cells in bone marrow in vivo and enhances myeloid progenitor cell survival in vitro. The protein is Interleukin-31 receptor subunit alpha (Il31ra) of Mus musculus (Mouse).